Consider the following 597-residue polypeptide: Probable E3 ubiquitin-protein ligase ARI1 (597 aa).

A TRIAD supradomain region spans residues 119–333; sequence SQMSCDVCME…IAGHSCGRYQ (215 aa). Zn(2+)-binding residues include C123, C126, C140, H142, C145, C148, C167, C172, C214, C220, C236, C238, C243, C246, H251, C256, C283, and C286. The segment at 123-172 adopts an RING-type 1 zinc-finger fold; the sequence is CDVCMEDLPGDHMTRMDCGHCFCNNCWTEHFTVQINEGQSKRIRCMAHQC. The segment at 194–256 adopts an IBR-type zinc-finger fold; that stretch reads AKFDRYLLES…LCQAHSPCSC (63 aa). The RING-type 2; atypical zinc finger occupies 283–311; that stretch reads CPKCYKPVEKNGGCNLVRCICGQCFCWLC. Residue C296 is part of the active site. Positions 301, 303, 308, 311, 319, and 329 each coordinate Zn(2+). The tract at residues 536–575 is disordered; it reads FQPLDSGTSGVTSRPEQASGSRSSEDTICSSSQKRPKKEG. A compositionally biased stretch (polar residues) spans 540–568; it reads DSGTSGVTSRPEQASGSRSSEDTICSSSQ.

This sequence belongs to the RBR family. Ariadne subfamily. The cofactor is Zn(2+). As to expression, ubiquitous.

It carries out the reaction [E2 ubiquitin-conjugating enzyme]-S-ubiquitinyl-L-cysteine + [acceptor protein]-L-lysine = [E2 ubiquitin-conjugating enzyme]-L-cysteine + [acceptor protein]-N(6)-ubiquitinyl-L-lysine.. Its pathway is protein modification; protein ubiquitination. Might act as an E3 ubiquitin-protein ligase, or as part of E3 complex, which accepts ubiquitin from specific E2 ubiquitin-conjugating enzymes and then transfers it to substrates. This is Probable E3 ubiquitin-protein ligase ARI1 (ARI1) from Arabidopsis thaliana (Mouse-ear cress).